Consider the following 482-residue polypeptide: ATP synthase subunit beta (482 aa).

An ATP-binding site is contributed by G161–T168.

The protein belongs to the ATPase alpha/beta chains family. In terms of assembly, F-type ATPases have 2 components, CF(1) - the catalytic core - and CF(0) - the membrane proton channel. CF(1) has five subunits: alpha(3), beta(3), gamma(1), delta(1), epsilon(1). CF(0) has three main subunits: a(1), b(2) and c(9-12). The alpha and beta chains form an alternating ring which encloses part of the gamma chain. CF(1) is attached to CF(0) by a central stalk formed by the gamma and epsilon chains, while a peripheral stalk is formed by the delta and b chains.

The protein resides in the cell inner membrane. It carries out the reaction ATP + H2O + 4 H(+)(in) = ADP + phosphate + 5 H(+)(out). Functionally, produces ATP from ADP in the presence of a proton gradient across the membrane. The catalytic sites are hosted primarily by the beta subunits. This chain is ATP synthase subunit beta, found in Anaeromyxobacter dehalogenans (strain 2CP-C).